Consider the following 122-residue polypeptide: Large ribosomal subunit protein uL14 (122 aa).

Belongs to the universal ribosomal protein uL14 family. As to quaternary structure, part of the 50S ribosomal subunit. Forms a cluster with proteins L3 and L19. In the 70S ribosome, L14 and L19 interact and together make contacts with the 16S rRNA in bridges B5 and B8.

Binds to 23S rRNA. Forms part of two intersubunit bridges in the 70S ribosome. The polypeptide is Large ribosomal subunit protein uL14 (Fervidobacterium nodosum (strain ATCC 35602 / DSM 5306 / Rt17-B1)).